The sequence spans 1182 residues: Lysine-specific demethylase hairless (1182 aa).

Disordered regions lie at residues 227 to 257 (LGLA…GAGR), 302 to 380 (YQLG…KKTW), 411 to 443 (AGSP…ARAW), and 507 to 546 (TGHS…ASLN). Residues 307-321 (PATPRCPSPGPPTPP) show a composition bias toward pro residues. The LXXLL motif 1 motif lies at 561–565 (LCRLL). Residues 595–620 (CSRCHHGLFNTHWRCSHCSHRLCVAC) form a C6-type zinc finger. The interval 697 to 746 (GDGGQQKEPTEKTPPTPQPSCNGDSNRTKDIKEETPDSTESPAEDGAGRS) is disordered. Over residues 722–731 (NRTKDIKEET) the composition is skewed to basic and acidic residues. The LXXLL motif 2 signature appears at 753–757 (LCELL). The JmjC domain maps to 939-1150 (DASRVQNLAS…LSAQLYHQGA (212 aa)). Fe cation-binding residues include Cys-1000, Glu-1002, and His-1118.

It depends on Fe(2+) as a cofactor. Expressed predominantly in brain, hair follicles and interfollicular epidermis. No expression in dermis.

The protein localises to the nucleus. It catalyses the reaction N(6),N(6)-dimethyl-L-lysyl(9)-[histone H3] + 2 2-oxoglutarate + 2 O2 = L-lysyl(9)-[histone H3] + 2 formaldehyde + 2 succinate + 2 CO2. In terms of biological role, histone demethylase that specifically demethylates both mono- and dimethylated 'Lys-9' of histone H3. May act as a transcription regulator controlling hair biology (via targeting of collagens), neural activity, and cell cycle. The sequence is that of Lysine-specific demethylase hairless (Hr) from Mus musculus (Mouse).